Here is a 276-residue protein sequence, read N- to C-terminus: Formamidopyrimidine-DNA glycosylase (276 aa).

P2 serves as the catalytic Schiff-base intermediate with DNA. E3 (proton donor) is an active-site residue. Catalysis depends on K58, which acts as the Proton donor; for beta-elimination activity. H94, R112, and R157 together coordinate DNA. The segment at 242–276 (FVYDRAGLPCRVCGTPIKQIVQGQRSTYFCPTCQR) adopts an FPG-type zinc-finger fold. The active-site Proton donor; for delta-elimination activity is R266.

The protein belongs to the FPG family. As to quaternary structure, monomer. It depends on Zn(2+) as a cofactor.

It catalyses the reaction Hydrolysis of DNA containing ring-opened 7-methylguanine residues, releasing 2,6-diamino-4-hydroxy-5-(N-methyl)formamidopyrimidine.. It carries out the reaction 2'-deoxyribonucleotide-(2'-deoxyribose 5'-phosphate)-2'-deoxyribonucleotide-DNA = a 3'-end 2'-deoxyribonucleotide-(2,3-dehydro-2,3-deoxyribose 5'-phosphate)-DNA + a 5'-end 5'-phospho-2'-deoxyribonucleoside-DNA + H(+). Functionally, involved in base excision repair of DNA damaged by oxidation or by mutagenic agents. Acts as a DNA glycosylase that recognizes and removes damaged bases. Has a preference for oxidized purines, such as 7,8-dihydro-8-oxoguanine (8-oxoG). Has AP (apurinic/apyrimidinic) lyase activity and introduces nicks in the DNA strand. Cleaves the DNA backbone by beta-delta elimination to generate a single-strand break at the site of the removed base with both 3'- and 5'-phosphates. In Paraburkholderia phytofirmans (strain DSM 17436 / LMG 22146 / PsJN) (Burkholderia phytofirmans), this protein is Formamidopyrimidine-DNA glycosylase.